The sequence spans 199 residues: Lysine exporter LysE (199 aa).

5 helical membrane passes run 6–26 (VVGF…NAFV), 42–62 (LCTV…GALI), 68–88 (ALNV…LLAA), 144–164 (WLFG…LGFG), and 178–198 (WRIL…SLTV).

This sequence belongs to the LysE/ArgO transporter (TC 2.A.75) family.

The protein localises to the cell inner membrane. Its function is as follows. Catalyzes the efflux of L-lysine. This chain is Lysine exporter LysE, found in Mycobacterium bovis (strain ATCC BAA-935 / AF2122/97).